Reading from the N-terminus, the 350-residue chain is Probable dual-specificity RNA methyltransferase RlmN (350 aa).

The active-site Proton acceptor is glutamate 91. Positions 97 to 327 constitute a Radical SAM core domain; that stretch reads YHHGNSVCIS…VTIRREMGRD (231 aa). Cysteine 104 and cysteine 332 form a disulfide bridge. 3 residues coordinate [4Fe-4S] cluster: cysteine 111, cysteine 115, and cysteine 118. Residues 158–159, serine 190, 213–215, and asparagine 289 contribute to the S-adenosyl-L-methionine site; these read GE and SLH. Cysteine 332 functions as the S-methylcysteine intermediate in the catalytic mechanism.

The protein belongs to the radical SAM superfamily. RlmN family. Requires [4Fe-4S] cluster as cofactor.

Its subcellular location is the cytoplasm. It carries out the reaction adenosine(2503) in 23S rRNA + 2 reduced [2Fe-2S]-[ferredoxin] + 2 S-adenosyl-L-methionine = 2-methyladenosine(2503) in 23S rRNA + 5'-deoxyadenosine + L-methionine + 2 oxidized [2Fe-2S]-[ferredoxin] + S-adenosyl-L-homocysteine. The catalysed reaction is adenosine(37) in tRNA + 2 reduced [2Fe-2S]-[ferredoxin] + 2 S-adenosyl-L-methionine = 2-methyladenosine(37) in tRNA + 5'-deoxyadenosine + L-methionine + 2 oxidized [2Fe-2S]-[ferredoxin] + S-adenosyl-L-homocysteine. In terms of biological role, specifically methylates position 2 of adenine 2503 in 23S rRNA and position 2 of adenine 37 in tRNAs. The chain is Probable dual-specificity RNA methyltransferase RlmN from Lachnospira eligens (strain ATCC 27750 / DSM 3376 / VPI C15-48 / C15-B4) (Eubacterium eligens).